Consider the following 1715-residue polypeptide: Sodium channel protein type 4 subunit alpha B (1715 aa).

Residues 1-126 (MGTLLPPVGS…IFAIKILVHS (126 aa)) lie on the Cytoplasmic side of the membrane. The I repeat unit spans residues 108-431 (LLSPFNSMRI…VVAMAYAEQN (324 aa)). Residues 127 to 145 (LFSLFIMATILTNCVFMTL) traverse the membrane as a helical segment. The Extracellular segment spans residues 146 to 152 (SDPPAWS). The helical transmembrane segment at 153–173 (KTVEYVFTFIYTFEATIKVVS) threads the bilayer. Topologically, residues 174-187 (RGFCVGQFTFLKDP) are cytoplasmic. A helical membrane pass occupies residues 188 to 205 (WNWLDFMVISMAYLTELV). At 206 to 211 (DLGNVS) the chain is on the extracellular side. A glycan (N-linked (GlcNAc...) asparagine) is linked at N209. The helical transmembrane segment at 212–228 (VLRTFRVLRALKTITVI) threads the bilayer. Over 229–247 (PGLKTIVGALIQSVKKLAD) the chain is Cytoplasmic. A helical membrane pass occupies residues 248–267 (AMVLTVFCLSVFALIGLQLF). Topologically, residues 268–368 (MGNLRQKCVL…PNYGYTSYDS (101 aa)) are extracellular. C275 and C337 are disulfide-bonded. N284, N304, and N339 each carry an N-linked (GlcNAc...) asparagine glycan. C346 and C352 form a disulfide bridge. The segment at residues 369–393 (FGWAFLALFRLMTQDFWENLFQLTL) is an intramembrane region (pore-forming). Residues 394–400 (RAAGKTY) lie on the Extracellular side of the membrane. A helical transmembrane segment spans residues 401–421 (MIFFVVVIFLGSFYLINLILA). The Cytoplasmic portion of the chain corresponds to 422 to 515 (VVAMAYAEQN…RCLSAIVMDP (94 aa)). One copy of the II repeat lies at 497 to 768 (CCSCWRHLKR…QIAVNRIKRA (272 aa)). A helical transmembrane segment spans residues 516–534 (FVDLGITICIILNTIFMAM). Residues 535 to 545 (EHYPMSADFEE) are Extracellular-facing. The chain crosses the membrane as a helical span at residues 546-565 (LLSVGNLVFTGIFTCEMVLK). Residues 566-579 (ILAMDPYFYFQVGW) lie on the Cytoplasmic side of the membrane. The helical transmembrane segment at 580–599 (NIFDSIIVTMSLVELGLANV) threads the bilayer. Residues 600 to 601 (QG) lie on the Extracellular side of the membrane. The helical transmembrane segment at 602-619 (LSVLRSFRLMRVFKLAKS) threads the bilayer. The Cytoplasmic portion of the chain corresponds to 620-635 (WPTLNMLIKIIGNSVG). Residues 636-654 (ALGNLTLVLAIIVFIFAVV) traverse the membrane as a helical segment. Topologically, residues 655–683 (GMQLFGKNYKDCVCRISEDCKLPRWHMND) are extracellular. An intrachain disulfide couples C668 to C674. Positions 684 to 704 (FFHAFLIIFRVLCGEWIDTMW) form an intramembrane region, pore-forming. The Extracellular segment spans residues 705-715 (DCMEVSGQTMC). C706 and C715 are disulfide-bonded. Residues 716-734 (LIVYMMVLVIGNLVVLNLF) form a helical membrane-spanning segment. At 735–915 (LALLLSSFSG…ACFIIVENNY (181 aa)) the chain is on the cytoplasmic side. The tract at residues 824-865 (EAESDSEDSDDDDVDEDKHSRCDESSFCSTVQDPEVKENEAD) is disordered. The span at 825 to 838 (AESDSEDSDDDDVD) shows a compositional bias: acidic residues. One copy of the III repeat lies at 896-1211 (KGKVWCNIRR…KKYYNAMKKL (316 aa)). A helical membrane pass occupies residues 916 to 933 (FESFIVFMILLSSGALAF). Over 934–946 (EDIYLEKHQLIKT) the chain is Extracellular. The chain crosses the membrane as a helical span at residues 947 to 965 (ILEYADKVFTYVFVVEMVL). Residues 966-979 (KWFAYGFKSYFSNA) are Cytoplasmic-facing. The chain crosses the membrane as a helical span at residues 980–998 (WCWLDFLIVDVSLVSLTAN). The Extracellular segment spans residues 999–1006 (ILGYSELG). The chain crosses the membrane as a helical span at residues 1007 to 1025 (AIKSLRTLRALRPLRALSR). The Cytoplasmic segment spans residues 1026–1042 (FEGMRVVVNALVGAVPS). Residues 1043-1062 (IFNVLLVCLIFWLIFSIMGV) form a helical membrane-spanning segment. Residues 1063 to 1115 (NLFAGKFSYCFNETSQEQFDKKIVNNKTECIALIEANFTEVRWKNLKVNYDNV) are Extracellular-facing. C1072 and C1092 are disulfide-bonded. N1074 and N1088 each carry an N-linked (GlcNAc...) asparagine glycan. The segment at residues 1116–1137 (GIGYLSLLQVATFKGWMEIMYA) is an intramembrane region (pore-forming). Topologically, residues 1138 to 1154 (AVDSRDVESQPIYEVNI) are extracellular. A helical transmembrane segment spans residues 1155-1176 (YMYLYFVIFIIFGSFFTLNLFI). Residues 1177–1239 (GVIIDNFNQQ…LVFDLVTKQI (63 aa)) are Cytoplasmic-facing. The interval 1195-1197 (IFM) is important for rapid channel inactivation. An IV repeat occupies 1220 to 1517 (VPRPENALQG…WEKFDPDATQ (298 aa)). The helical transmembrane segment at 1240–1257 (FDVFIMVLICLNMVTMMV) threads the bilayer. Topologically, residues 1258–1268 (ETDEQTKEKED) are extracellular. Residues 1269 to 1287 (ILYWINVIFIVIFTTECIL) traverse the membrane as a helical segment. Topologically, residues 1288 to 1299 (KTIALRRHYFSI) are cytoplasmic. A helical transmembrane segment spans residues 1300-1317 (GWNVFDFVVVILSILGLL). Residues 1318–1330 (LADIIEKYFVSPT) lie on the Extracellular side of the membrane. A helical membrane pass occupies residues 1331–1347 (LFRVIRLARIGRVLRLI). Over 1348–1366 (RGAKGIRTLLFALMMSLPA) the chain is Cytoplasmic. Residues 1367–1384 (LFNIGLLLFLIMFIFSIF) form a helical membrane-spanning segment. Residues 1385–1406 (GMSNFAYVKKEAMIDDMFNFET) lie on the Extracellular side of the membrane. The pore-forming intramembrane region spans 1407–1429 (FGNSMICLFMITTSAGWDGLLSP). Residues 1430-1458 (IMNKPPDCDPDLENPGTTVRGNCGSPAIG) are Extracellular-facing. A disulfide bond links C1437 and C1452. The chain crosses the membrane as a helical span at residues 1459 to 1481 (IVFFSTYIIMSFLVVVNMYIAII). The Cytoplasmic portion of the chain corresponds to 1482–1715 (LENFNVATEE…LGTSERESLV (234 aa)). The IQ domain maps to 1611–1640 (EEVAARVIQRAYRKYLLQRTVRLASFTYRE).

The protein belongs to the sodium channel (TC 1.A.1.10) family. Nav1.4/SCN4A subfamily. Voltage-gated sodium (Nav) channels consist of an ion-conducting alpha subunit which is functional on its own associated with regulatory beta subunits.

It is found in the cell membrane. The catalysed reaction is Na(+)(in) = Na(+)(out). In terms of biological role, pore-forming subunit of a voltage-gated sodium (Nav) channel that directly mediates the depolarizing phase of action potentials in excitable membranes. Navs, also called VGSCs (voltage-gated sodium channels) or VDSCs (voltage-dependent sodium channels), operate by switching between closed and open conformations depending on the voltage difference across the membrane. In the open conformation they allow Na(+) ions to selectively pass through the pore, along their electrochemical gradient. The influx of Na+ ions provokes membrane depolarization, initiating the propagation of electrical signals throughout cells and tissues. The protein is Sodium channel protein type 4 subunit alpha B (scn4ab) of Tetraodon nigroviridis (Spotted green pufferfish).